Consider the following 485-residue polypeptide: Argininosuccinate lyase (485 aa).

Belongs to the lyase 1 family. Argininosuccinate lyase subfamily.

The protein localises to the cytoplasm. It catalyses the reaction 2-(N(omega)-L-arginino)succinate = fumarate + L-arginine. The protein operates within amino-acid biosynthesis; L-arginine biosynthesis; L-arginine from L-ornithine and carbamoyl phosphate: step 3/3. In Nitrosopumilus maritimus (strain SCM1), this protein is Argininosuccinate lyase.